The sequence spans 242 residues: Uridylate kinase (242 aa).

11–14 contributes to the ATP binding site; sequence KLSG. The interval 19 to 24 is involved in allosteric activation by GTP; the sequence is GDKGVG. Glycine 53 contributes to the UMP binding site. ATP-binding residues include glycine 54 and arginine 58. Residues aspartate 73 and 134–141 each bind UMP; that span reads IGSPYFST. ATP contacts are provided by asparagine 162, tyrosine 168, and aspartate 171.

Belongs to the UMP kinase family. As to quaternary structure, homohexamer.

It is found in the cytoplasm. The enzyme catalyses UMP + ATP = UDP + ADP. Its pathway is pyrimidine metabolism; CTP biosynthesis via de novo pathway; UDP from UMP (UMPK route): step 1/1. Its activity is regulated as follows. Allosterically activated by GTP. Inhibited by UTP. Catalyzes the reversible phosphorylation of UMP to UDP. This is Uridylate kinase from Streptococcus agalactiae serotype III (strain NEM316).